The primary structure comprises 1270 residues: DNA-directed RNA polymerase subunit beta (1270 aa).

This sequence belongs to the RNA polymerase beta chain family. The RNAP catalytic core consists of 2 alpha, 1 beta, 1 beta' and 1 omega subunit. When a sigma factor is associated with the core the holoenzyme is formed, which can initiate transcription.

The catalysed reaction is RNA(n) + a ribonucleoside 5'-triphosphate = RNA(n+1) + diphosphate. Functionally, DNA-dependent RNA polymerase catalyzes the transcription of DNA into RNA using the four ribonucleoside triphosphates as substrates. In Flavobacterium psychrophilum (strain ATCC 49511 / DSM 21280 / CIP 103535 / JIP02/86), this protein is DNA-directed RNA polymerase subunit beta.